The sequence spans 242 residues: Uridylate kinase (242 aa).

15–18 contributes to the ATP binding site; the sequence is KLSG. An involved in allosteric activation by GTP region spans residues 23–28; the sequence is GDEGFG. Gly-57 is a binding site for UMP. ATP contacts are provided by Gly-58 and Arg-62. Residues Asp-77 and 138–145 contribute to the UMP site; that span reads TGNPFCTT. Positions 165, 171, and 174 each coordinate ATP.

The protein belongs to the UMP kinase family. As to quaternary structure, homohexamer.

The protein resides in the cytoplasm. The enzyme catalyses UMP + ATP = UDP + ADP. Its pathway is pyrimidine metabolism; CTP biosynthesis via de novo pathway; UDP from UMP (UMPK route): step 1/1. Allosterically activated by GTP. Inhibited by UTP. Functionally, catalyzes the reversible phosphorylation of UMP to UDP. This Shewanella sp. (strain ANA-3) protein is Uridylate kinase.